Reading from the N-terminus, the 382-residue chain is Carbamoyl phosphate synthase small chain (382 aa).

The interval M1–D189 is CPSase. The L-glutamine site is built by S47 and G241. The 188-residue stretch at H193–S380 folds into the Glutamine amidotransferase type-1 domain. C269 functions as the Nucleophile in the catalytic mechanism. Positions 270, 273, 311, 313, and 314 each coordinate L-glutamine. Catalysis depends on residues H353 and E355.

Belongs to the CarA family. In terms of assembly, composed of two chains; the small (or glutamine) chain promotes the hydrolysis of glutamine to ammonia, which is used by the large (or ammonia) chain to synthesize carbamoyl phosphate. Tetramer of heterodimers (alpha,beta)4.

It carries out the reaction hydrogencarbonate + L-glutamine + 2 ATP + H2O = carbamoyl phosphate + L-glutamate + 2 ADP + phosphate + 2 H(+). The enzyme catalyses L-glutamine + H2O = L-glutamate + NH4(+). It functions in the pathway amino-acid biosynthesis; L-arginine biosynthesis; carbamoyl phosphate from bicarbonate: step 1/1. It participates in pyrimidine metabolism; UMP biosynthesis via de novo pathway; (S)-dihydroorotate from bicarbonate: step 1/3. In terms of biological role, small subunit of the glutamine-dependent carbamoyl phosphate synthetase (CPSase). CPSase catalyzes the formation of carbamoyl phosphate from the ammonia moiety of glutamine, carbonate, and phosphate donated by ATP, constituting the first step of 2 biosynthetic pathways, one leading to arginine and/or urea and the other to pyrimidine nucleotides. The small subunit (glutamine amidotransferase) binds and cleaves glutamine to supply the large subunit with the substrate ammonia. This Salmonella typhi protein is Carbamoyl phosphate synthase small chain.